Consider the following 313-residue polypeptide: Aspartate carbamoyltransferase catalytic subunit (313 aa).

Carbamoyl phosphate contacts are provided by R66 and T67. K94 provides a ligand contact to L-aspartate. The carbamoyl phosphate site is built by R116, H144, and Q147. R177 and R231 together coordinate L-aspartate. Residues G272 and P273 each coordinate carbamoyl phosphate.

It belongs to the aspartate/ornithine carbamoyltransferase superfamily. ATCase family. In terms of assembly, heterododecamer (2C3:3R2) of six catalytic PyrB chains organized as two trimers (C3), and six regulatory PyrI chains organized as three dimers (R2).

It catalyses the reaction carbamoyl phosphate + L-aspartate = N-carbamoyl-L-aspartate + phosphate + H(+). Its pathway is pyrimidine metabolism; UMP biosynthesis via de novo pathway; (S)-dihydroorotate from bicarbonate: step 2/3. Its function is as follows. Catalyzes the condensation of carbamoyl phosphate and aspartate to form carbamoyl aspartate and inorganic phosphate, the committed step in the de novo pyrimidine nucleotide biosynthesis pathway. In Pelagibacter ubique (strain HTCC1062), this protein is Aspartate carbamoyltransferase catalytic subunit.